The sequence spans 234 residues: Demethylmenaquinone methyltransferase (234 aa).

Residues T58, D79, and 104 to 105 (NA) contribute to the S-adenosyl-L-methionine site.

The protein belongs to the class I-like SAM-binding methyltransferase superfamily. MenG/UbiE family.

It carries out the reaction a 2-demethylmenaquinol + S-adenosyl-L-methionine = a menaquinol + S-adenosyl-L-homocysteine + H(+). The protein operates within quinol/quinone metabolism; menaquinone biosynthesis; menaquinol from 1,4-dihydroxy-2-naphthoate: step 2/2. Functionally, methyltransferase required for the conversion of demethylmenaquinol (DMKH2) to menaquinol (MKH2). The polypeptide is Demethylmenaquinone methyltransferase (Lysinibacillus sphaericus (strain C3-41)).